Reading from the N-terminus, the 132-residue chain is MVEKNTYFIGVGRRKTAVATVKLTSGNGVIVIDGKPIEERFTRVQERNVILNPMMVTDTMGKYNAVIKVLGGGVAGQSGAIAHGIARALEKSDDKLRATLKSNGLLTRDDRTKERKKPGLKRARKAPQYTKR.

The disordered stretch occupies residues 100-132 (LKSNGLLTRDDRTKERKKPGLKRARKAPQYTKR). Positions 114–132 (ERKKPGLKRARKAPQYTKR) are enriched in basic residues.

The protein belongs to the universal ribosomal protein uS9 family.

In Dehalococcoides mccartyi (strain ATCC BAA-2266 / KCTC 15142 / 195) (Dehalococcoides ethenogenes (strain 195)), this protein is Small ribosomal subunit protein uS9.